The following is a 250-amino-acid chain: MADS-box protein J2 (250 aa).

The MADS-box domain maps to 1 to 61 (MGRGRVELKR…GKLYEFSSAS (61 aa)). The 91-residue stretch at 87-177 (TQMNYNEYVR…KNKLEESAAR (91 aa)) folds into the K-box domain.

It is found in the nucleus. MADS-box transcription factor that acts redundantly with EJ2 to control meristem maturation and inflorescence architecture. The protein is MADS-box protein J2 of Solanum lycopersicum (Tomato).